A 97-amino-acid polypeptide reads, in one-letter code: UPF0235 protein cbdbA1230 (97 aa).

It belongs to the UPF0235 family.

In Dehalococcoides mccartyi (strain CBDB1), this protein is UPF0235 protein cbdbA1230.